Here is a 220-residue protein sequence, read N- to C-terminus: Iron-sulfur cluster repair protein YtfE (220 aa).

It belongs to the RIC family. YtfE subfamily. Homodimer.

The protein localises to the cytoplasm. Functionally, di-iron-containing protein involved in the repair of iron-sulfur clusters damaged by oxidative and nitrosative stress conditions. This is Iron-sulfur cluster repair protein YtfE from Citrobacter koseri (strain ATCC BAA-895 / CDC 4225-83 / SGSC4696).